A 962-amino-acid chain; its full sequence is Putative primase C962R (962 aa).

In terms of domain architecture, SF3 helicase spans 607-775 (ELDARLWIMF…PDPNNSYEKK (169 aa)). 636–643 (GGGCNGKT) lines the ATP pocket.

Belongs to the asfivirus helicase C962R family.

The sequence is that of Putative primase C962R from Ornithodoros (relapsing fever ticks).